The chain runs to 258 residues: 1-(5-phosphoribosyl)-5-[(5-phosphoribosylamino)methylideneamino] imidazole-4-carboxamide isomerase 2 (258 aa).

Asp-14 (proton acceptor) is an active-site residue. Asp-140 functions as the Proton donor in the catalytic mechanism.

This sequence belongs to the HisA/HisF family.

Its subcellular location is the cytoplasm. The enzyme catalyses 1-(5-phospho-beta-D-ribosyl)-5-[(5-phospho-beta-D-ribosylamino)methylideneamino]imidazole-4-carboxamide = 5-[(5-phospho-1-deoxy-D-ribulos-1-ylimino)methylamino]-1-(5-phospho-beta-D-ribosyl)imidazole-4-carboxamide. The protein operates within amino-acid biosynthesis; L-histidine biosynthesis; L-histidine from 5-phospho-alpha-D-ribose 1-diphosphate: step 4/9. In Photorhabdus laumondii subsp. laumondii (strain DSM 15139 / CIP 105565 / TT01) (Photorhabdus luminescens subsp. laumondii), this protein is 1-(5-phosphoribosyl)-5-[(5-phosphoribosylamino)methylideneamino] imidazole-4-carboxamide isomerase 2 (hisA2).